The following is a 488-amino-acid chain: (Z)-2-((N-methylformamido)methylene)-5-hydroxybutyrolactone dehydrogenase (488 aa).

Residues 149 to 150 and 226 to 227 each bind NAD(+); these read WN and GG. Glutamate 248 functions as the Proton acceptor in the catalytic mechanism. Position 249 (leucine 249) interacts with NAD(+). Cysteine 282 functions as the Nucleophile in the catalytic mechanism. Glutamate 380 lines the NAD(+) pocket.

This sequence belongs to the aldehyde dehydrogenase family. Homodimer.

It catalyses the reaction (Z)-2-((N-methylformamido)methylene)-5-hydroxybutanolactone + NAD(+) + H2O = (E)-2-((N-methylformamido) methylene)succinate + NADH + 3 H(+). Functionally, involved in the degradation of the pyridine ring of trigonelline (TG; N-methylnicotinate) into succinate and methylamine as carbon and nitrogen sources, respectively. Catalyzes the NAD(+)-dependent oxidation of (Z)-2-((N-methylformamido)methylene)-5-hydroxybutyrolactone (MFMB) to yield (E)-2-((N-methylformamido)methylene)succinate (MFMS). In Acinetobacter baylyi (strain ATCC 33305 / BD413 / ADP1), this protein is (Z)-2-((N-methylformamido)methylene)-5-hydroxybutyrolactone dehydrogenase.